Consider the following 365-residue polypeptide: TD and POZ domain-containing protein 1 (365 aa).

An MATH domain is found at 19–149; that stretch reads KFCYKWTISN…EDQLTICCKV (131 aa). The BTB domain maps to 188–250; that stretch reads TDCCLLVAGH…EMMGFIYTGK (63 aa).

This sequence belongs to the Tdpoz family.

This Mus musculus (Mouse) protein is TD and POZ domain-containing protein 1.